The primary structure comprises 186 residues: Ribosome-recycling factor (186 aa).

It belongs to the RRF family.

The protein resides in the cytoplasm. Functionally, responsible for the release of ribosomes from messenger RNA at the termination of protein biosynthesis. May increase the efficiency of translation by recycling ribosomes from one round of translation to another. The chain is Ribosome-recycling factor from Maricaulis maris (strain MCS10) (Caulobacter maris).